The sequence spans 775 residues: 5-methyltetrahydropteroyltriglutamate--homocysteine methyltransferase (775 aa).

5-methyltetrahydropteroyltri-L-glutamate-binding positions include 16–19 (REMK) and K115. L-homocysteine-binding positions include 435 to 437 (IGS) and E488. L-methionine-binding positions include 435–437 (IGS) and E488. 5-methyltetrahydropteroyltri-L-glutamate is bound by residues 519–520 (RC) and W565. Position 603 (D603) interacts with L-homocysteine. Position 603 (D603) interacts with L-methionine. E609 contacts 5-methyltetrahydropteroyltri-L-glutamate. 3 residues coordinate Zn(2+): H645, C647, and E669. Residue H698 is the Proton donor of the active site. Residue C730 participates in Zn(2+) binding.

Belongs to the vitamin-B12 independent methionine synthase family. It depends on Zn(2+) as a cofactor.

The enzyme catalyses 5-methyltetrahydropteroyltri-L-glutamate + L-homocysteine = tetrahydropteroyltri-L-glutamate + L-methionine. It participates in amino-acid biosynthesis; L-methionine biosynthesis via de novo pathway; L-methionine from L-homocysteine (MetE route): step 1/1. In terms of biological role, catalyzes the transfer of a methyl group from 5-methyltetrahydrofolate to homocysteine resulting in methionine formation. The chain is 5-methyltetrahydropteroyltriglutamate--homocysteine methyltransferase from Coxiella burnetii (strain Dugway 5J108-111).